Reading from the N-terminus, the 216-residue chain is GTP cyclohydrolase 1 (216 aa).

Zn(2+)-binding residues include Cys-108, His-111, and Cys-179.

Belongs to the GTP cyclohydrolase I family. Toroid-shaped homodecamer, composed of two pentamers of five dimers.

The catalysed reaction is GTP + H2O = 7,8-dihydroneopterin 3'-triphosphate + formate + H(+). It participates in cofactor biosynthesis; 7,8-dihydroneopterin triphosphate biosynthesis; 7,8-dihydroneopterin triphosphate from GTP: step 1/1. The chain is GTP cyclohydrolase 1 from Shewanella sp. (strain MR-7).